We begin with the raw amino-acid sequence, 875 residues long: Leucine--tRNA ligase (875 aa).

Over residues 1-20 the composition is skewed to polar residues; sequence MPSAGSVNAANPAVDTSAQT. The segment at 1 to 22 is disordered; the sequence is MPSAGSVNAANPAVDTSAQTGR. The 'HIGH' region signature appears at 60–70; sequence PYPSGSLHMGH. The short motif at 634–638 is the 'KMSKS' region element; it reads KMSKS. K637 serves as a coordination point for ATP.

It belongs to the class-I aminoacyl-tRNA synthetase family.

It localises to the cytoplasm. It carries out the reaction tRNA(Leu) + L-leucine + ATP = L-leucyl-tRNA(Leu) + AMP + diphosphate. The polypeptide is Leucine--tRNA ligase (Synechococcus sp. (strain CC9605)).